The chain runs to 293 residues: 4-hydroxy-tetrahydrodipicolinate synthase (293 aa).

Pyruvate is bound at residue Thr-51. Tyr-140 acts as the Proton donor/acceptor in catalysis. Lys-168 (schiff-base intermediate with substrate) is an active-site residue. Ile-209 is a pyruvate binding site.

Belongs to the DapA family. Homotetramer; dimer of dimers.

The protein localises to the cytoplasm. The enzyme catalyses L-aspartate 4-semialdehyde + pyruvate = (2S,4S)-4-hydroxy-2,3,4,5-tetrahydrodipicolinate + H2O + H(+). The protein operates within amino-acid biosynthesis; L-lysine biosynthesis via DAP pathway; (S)-tetrahydrodipicolinate from L-aspartate: step 3/4. Its function is as follows. Catalyzes the condensation of (S)-aspartate-beta-semialdehyde [(S)-ASA] and pyruvate to 4-hydroxy-tetrahydrodipicolinate (HTPA). The sequence is that of 4-hydroxy-tetrahydrodipicolinate synthase from Streptococcus mutans serotype c (strain ATCC 700610 / UA159).